The primary structure comprises 354 residues: Peptide chain release factor 1 (354 aa).

N5-methylglutamine is present on glutamine 230.

The protein belongs to the prokaryotic/mitochondrial release factor family. Post-translationally, methylated by PrmC. Methylation increases the termination efficiency of RF1.

The protein resides in the cytoplasm. Peptide chain release factor 1 directs the termination of translation in response to the peptide chain termination codons UAG and UAA. The protein is Peptide chain release factor 1 of Thermus thermophilus (strain ATCC BAA-163 / DSM 7039 / HB27).